The chain runs to 109 residues: uncharacterized protein (109 aa).

The chain crosses the membrane as a helical span at residues 26–48 (VTSIMTVSDINYLLLYLIILLTL).

Its subcellular location is the membrane. This is an uncharacterized protein from Saccharomyces cerevisiae (strain ATCC 204508 / S288c) (Baker's yeast).